A 266-amino-acid chain; its full sequence is Succinate dehydrogenase [ubiquinone] iron-sulfur subunit, mitochondrial (266 aa).

Residues 1–20 constitute a mitochondrion transit peptide; the sequence is MLNVLLRRKAFCLVTKKGMA. One can recognise a 2Fe-2S ferredoxin-type domain in the interval 36–127; the sequence is FKVYRWNPDE…QLKIYPLPHM (92 aa). Positions 87, 92, 95, and 107 each coordinate [2Fe-2S] cluster. In terms of domain architecture, 4Fe-4S ferredoxin-type spans 169–199; it reads DRKKLDGLYECILCACCSTSCPSYWWNQEQY. [4Fe-4S] cluster is bound by residues Cys179, Cys182, and Cys185. Position 189 (Cys189) interacts with [3Fe-4S] cluster. An a ubiquinone-binding site is contributed by Trp194. Residues Cys236 and Cys242 each coordinate [3Fe-4S] cluster. Cys246 contacts [4Fe-4S] cluster.

This sequence belongs to the succinate dehydrogenase/fumarate reductase iron-sulfur protein family. Component of complex II composed of four subunits: a flavoprotein (FP), an iron-sulfur protein (IP), and a cytochrome b composed of a large and a small subunit. The cofactor is [2Fe-2S] cluster. [3Fe-4S] cluster is required as a cofactor. It depends on [4Fe-4S] cluster as a cofactor.

It localises to the mitochondrion inner membrane. It catalyses the reaction a quinone + succinate = fumarate + a quinol. The protein operates within carbohydrate metabolism; tricarboxylic acid cycle; fumarate from succinate (eukaryal route): step 1/1. Subunit of succinate dehydrogenase (SDH) that is involved in complex II of the mitochondrial electron transport chain and is responsible for transferring electrons from succinate to ubiquinone (coenzyme Q). SDH1 and SDH2 form the catalytic dimer. Electrons flow from succinate to the FAD bound to SDH1, and sequentially through the iron-sulfur clusters bound to SDH2 and enter the membrane dimer formed by SDH3 and SDH4. The polypeptide is Succinate dehydrogenase [ubiquinone] iron-sulfur subunit, mitochondrial (SDH2) (Saccharomyces cerevisiae (strain ATCC 204508 / S288c) (Baker's yeast)).